Here is a 162-residue protein sequence, read N- to C-terminus: Phosphopantetheine adenylyltransferase (162 aa).

Ser9 is a substrate binding site. ATP-binding positions include 9–10 (SF) and His17. Substrate contacts are provided by Lys41, Leu73, and Lys87. ATP is bound by residues 88-90 (GLR), Glu98, and 122-128 (YSFLSSS).

It belongs to the bacterial CoaD family. In terms of assembly, homohexamer. Mg(2+) serves as cofactor.

Its subcellular location is the cytoplasm. The enzyme catalyses (R)-4'-phosphopantetheine + ATP + H(+) = 3'-dephospho-CoA + diphosphate. Its pathway is cofactor biosynthesis; coenzyme A biosynthesis; CoA from (R)-pantothenate: step 4/5. In terms of biological role, reversibly transfers an adenylyl group from ATP to 4'-phosphopantetheine, yielding dephospho-CoA (dPCoA) and pyrophosphate. This chain is Phosphopantetheine adenylyltransferase, found in Salinispora tropica (strain ATCC BAA-916 / DSM 44818 / JCM 13857 / NBRC 105044 / CNB-440).